Here is a 210-residue protein sequence, read N- to C-terminus: Small ribosomal subunit protein uS3 (210 aa).

Positions Ile17 to Lys86 constitute a KH type-2 domain.

Belongs to the universal ribosomal protein uS3 family. As to quaternary structure, part of the 30S ribosomal subunit.

Binds the lower part of the 30S subunit head. The polypeptide is Small ribosomal subunit protein uS3 (Pyrococcus abyssi (strain GE5 / Orsay)).